A 174-amino-acid polypeptide reads, in one-letter code: Small ribosomal subunit protein uS5 (174 aa).

The S5 DRBM domain maps to 16–79 (LSELLVSVRR…NAAKKSMIRV (64 aa)).

This sequence belongs to the universal ribosomal protein uS5 family. In terms of assembly, part of the 30S ribosomal subunit. Contacts proteins S4 and S8.

Functionally, with S4 and S12 plays an important role in translational accuracy. Its function is as follows. Located at the back of the 30S subunit body where it stabilizes the conformation of the head with respect to the body. This is Small ribosomal subunit protein uS5 from Anaplasma marginale (strain Florida).